Consider the following 218-residue polypeptide: 3-dehydroquinate dehydratase (218 aa).

3-dehydroquinate is bound by residues 29-31 and arginine 56; that span reads EFR. Residue histidine 116 is the Proton donor/acceptor of the active site. The Schiff-base intermediate with substrate role is filled by lysine 142. Arginine 180, serine 200, and glutamine 204 together coordinate 3-dehydroquinate.

It belongs to the type-I 3-dehydroquinase family. In terms of assembly, homodimer.

It catalyses the reaction 3-dehydroquinate = 3-dehydroshikimate + H2O. The protein operates within metabolic intermediate biosynthesis; chorismate biosynthesis; chorismate from D-erythrose 4-phosphate and phosphoenolpyruvate: step 3/7. In terms of biological role, involved in the third step of the chorismate pathway, which leads to the biosynthesis of aromatic amino acids. Catalyzes the cis-dehydration of 3-dehydroquinate (DHQ) and introduces the first double bond of the aromatic ring to yield 3-dehydroshikimate. The chain is 3-dehydroquinate dehydratase from Methanococcus maripaludis (strain DSM 14266 / JCM 13030 / NBRC 101832 / S2 / LL).